The chain runs to 351 residues: Ribonucleoside-diphosphate reductase subunit beta (351 aa).

Asp-94, Glu-124, and His-127 together coordinate Fe cation. Tyr-131 is an active-site residue. 3 residues coordinate Fe cation: Glu-191, Glu-225, and His-228.

This sequence belongs to the ribonucleoside diphosphate reductase small chain family. In terms of assembly, tetramer of two alpha and two beta subunits. Requires Fe cation as cofactor.

It carries out the reaction a 2'-deoxyribonucleoside 5'-diphosphate + [thioredoxin]-disulfide + H2O = a ribonucleoside 5'-diphosphate + [thioredoxin]-dithiol. In terms of biological role, provides the precursors necessary for DNA synthesis. Catalyzes the biosynthesis of deoxyribonucleotides from the corresponding ribonucleotides. This chain is Ribonucleoside-diphosphate reductase subunit beta (nrdB), found in Treponema pallidum (strain Nichols).